We begin with the raw amino-acid sequence, 406 residues long: Putative cfxQ-like protein R730 (406 aa).

A disordered region spans residues 1–37; it reads MKRSHDSITRSINSDNDSETNMNSDNNNNNKPNQRKK. Positions 13–32 are enriched in low complexity; the sequence is NSDNDSETNMNSDNNNNNKP. 173 to 180 serves as a coordination point for ATP; that stretch reads GPPGVGKS.

This sequence belongs to the CbxX/CfxQ family.

This Acanthamoeba polyphaga mimivirus (APMV) protein is Putative cfxQ-like protein R730.